The sequence spans 186 residues: Acireductone dioxygenase (186 aa).

Fe(2+)-binding residues include His103, His105, Glu109, and His147. Residues His103, His105, Glu109, and His147 each contribute to the Ni(2+) site.

It belongs to the acireductone dioxygenase (ARD) family. As to quaternary structure, monomer. Fe(2+) serves as cofactor. Requires Ni(2+) as cofactor.

It catalyses the reaction 1,2-dihydroxy-5-(methylsulfanyl)pent-1-en-3-one + O2 = 3-(methylsulfanyl)propanoate + CO + formate + 2 H(+). The enzyme catalyses 1,2-dihydroxy-5-(methylsulfanyl)pent-1-en-3-one + O2 = 4-methylsulfanyl-2-oxobutanoate + formate + 2 H(+). Its pathway is amino-acid biosynthesis; L-methionine biosynthesis via salvage pathway; L-methionine from S-methyl-5-thio-alpha-D-ribose 1-phosphate: step 5/6. Catalyzes 2 different reactions between oxygen and the acireductone 1,2-dihydroxy-3-keto-5-methylthiopentene (DHK-MTPene) depending upon the metal bound in the active site. Fe-containing acireductone dioxygenase (Fe-ARD) produces formate and 2-keto-4-methylthiobutyrate (KMTB), the alpha-ketoacid precursor of methionine in the methionine recycle pathway. Ni-containing acireductone dioxygenase (Ni-ARD) produces methylthiopropionate, carbon monoxide and formate, and does not lie on the methionine recycle pathway. The chain is Acireductone dioxygenase from Parasynechococcus marenigrum (strain WH8102).